A 229-amino-acid polypeptide reads, in one-letter code: Putative N-acetylmannosamine-6-phosphate 2-epimerase (229 aa).

Belongs to the NanE family.

It carries out the reaction an N-acyl-D-glucosamine 6-phosphate = an N-acyl-D-mannosamine 6-phosphate. It participates in amino-sugar metabolism; N-acetylneuraminate degradation; D-fructose 6-phosphate from N-acetylneuraminate: step 3/5. Its function is as follows. Converts N-acetylmannosamine-6-phosphate (ManNAc-6-P) to N-acetylglucosamine-6-phosphate (GlcNAc-6-P). The polypeptide is Putative N-acetylmannosamine-6-phosphate 2-epimerase (Shigella sonnei (strain Ss046)).